The chain runs to 73 residues: UPF0270 protein SG2298 (73 aa).

Belongs to the UPF0270 family.

The chain is UPF0270 protein SG2298 from Sodalis glossinidius (strain morsitans).